The chain runs to 99 residues: Large ribosomal subunit protein uL23 (99 aa).

Belongs to the universal ribosomal protein uL23 family. Part of the 50S ribosomal subunit. Contacts protein L29, and trigger factor when it is bound to the ribosome.

Functionally, one of the early assembly proteins it binds 23S rRNA. One of the proteins that surrounds the polypeptide exit tunnel on the outside of the ribosome. Forms the main docking site for trigger factor binding to the ribosome. This Pseudomonas entomophila (strain L48) protein is Large ribosomal subunit protein uL23.